We begin with the raw amino-acid sequence, 196 residues long: Sulfur-rich protein (196 aa).

A run of 3 helical transmembrane segments spans residues 34–54, 76–96, and 105–125; these read VTAG…LIGW, ITLL…MFIF, and FWLI…SLCF.

The protein localises to the membrane. The chain is Sulfur-rich protein (srp) from Chlamydia pneumoniae (Chlamydophila pneumoniae).